A 210-amino-acid polypeptide reads, in one-letter code: HTH-type transcriptional regulator MtrR (210 aa).

Residues 9 to 69 form the HTH tetR-type domain; it reads LKTKEHLMLA…ALFQRICDDI (61 aa). The segment at residues 32-51 is a DNA-binding region (H-T-H motif); that stretch reads SLNEIAQAAGVTRGALYWHF.

In terms of assembly, homodimer. Binds to DNA as a pair of dimers.

Its activity is regulated as follows. DNA binding is affected significantly by increasing the NaCl concentration. In terms of biological role, controls the permeability of the cell envelope to hydrophobic compounds such as antibiotics and detergents. Represses transcription of the mtrCDE-encoded efflux pump by binding within the mtrCDE promoter. Also negatively regulates the expression of farR, by binding to its promoter region, leading indirectly to the positive regulation of expression of the farAB-encoded efflux pump. The chain is HTH-type transcriptional regulator MtrR from Neisseria gonorrhoeae.